The chain runs to 1714 residues: Latrophilin Cirl (1714 aa).

At 1-765 the chain is on the extracellular side; it reads MSSIDISGRY…LFTMFDGNMR (765 aa). The SUEL-type lectin domain occupies 26-115; that stretch reads ACEGKKLTIE…KYLEAHYQCI (90 aa). Asn143 carries an N-linked (GlcNAc...) asparagine glycan. Positions 183-302 are disordered; the sequence is PPHTVTHSTP…GSPASGNNSV (120 aa). Over residues 186 to 198 the composition is skewed to low complexity; that stretch reads TVTHSTPSSSTVP. A compositionally biased stretch (polar residues) spans 244–262; that stretch reads PSSKLPSAGNATAPSNTRI. Asn253 is a glycosylation site (N-linked (GlcNAc...) asparagine). Low complexity-rich tracts occupy residues 272–282 and 290–301; these read DDGTLLTTKSS and ASNGSPASGNNS. Asn299, Asn338, Asn395, Asn652, Asn701, and Asn728 each carry an N-linked (GlcNAc...) asparagine glycan. The interval 373–397 is disordered; that stretch reads YDEYDDDPSSTTPAPSGGDCLHNSS. The GAIN-B domain maps to 558–752; the sequence is RSVVQKVKNI…AILMDVVDEH (195 aa). 2 disulfide bridges follow: Cys707–Cys734 and Cys722–Cys736. A GPS region spans residues 707–752; the sequence is CVFWNYIDHAWSANGCSLESTNRTHSVCSCNHLTNFAILMDVVDEH. A helical transmembrane segment spans residues 766-786; it reads VFIYISIAICVVFIVIALLTL. Over 787–799 the chain is Cytoplasmic; that stretch reads KLFNGVFVKSART. Residues 800-820 traverse the membrane as a helical segment; it reads TIYTSIYVCLLAIELLFLLGI. The Extracellular segment spans residues 821-826; the sequence is EQTETS. The chain crosses the membrane as a helical span at residues 827-847; the sequence is IFCGFITVFLHCAILSGAAWF. Residues 848–873 lie on the Cytoplasmic side of the membrane; sequence CYEAFHSYYTLTSDELLVEVDQTPKV. The chain crosses the membrane as a helical span at residues 874–894; sequence NWYYLLSYGLSVSVVAISVAI. Residues 895–911 are Extracellular-facing; it reads NPSTYTQNDYCVLMEAN. Residues 912 to 932 traverse the membrane as a helical segment; it reads ILFYATFVAPVLIFFVAAIGY. Residues 933–966 are Cytoplasmic-facing; sequence TFLSWIIMCRKSCTGLKTKEHTRLASVRFDIRCS. The helical transmembrane segment at 967–987 threads the bilayer; that stretch reads FVFLLLLSAVWCSAYFYLRGA. Over 988 to 994 the chain is Extracellular; it reads KTDEDTT. A helical membrane pass occupies residues 995 to 1015; it reads TIYGYCFICFNTLLGLYIFVF. Residues 1016-1714 lie on the Cytoplasmic side of the membrane; that stretch reads HCIQNEKIRR…VRCYLEPLAK (699 aa). A phosphoserine mark is found at Ser1155, Ser1245, and Ser1252. Disordered regions lie at residues 1229–1253, 1268–1287, 1293–1354, 1447–1536, and 1551–1694; these read PNSQ…LHSR, KTKQ…LDPP, AFYQ…PPPH, GGGS…DERM, and FQRQ…QQRH. Over residues 1296–1315 the composition is skewed to low complexity; the sequence is QQQQQMRRQQQQQQQQQQQQ. Residues Ser1317 and Ser1318 each carry the phosphoserine modification. 2 stretches are compositionally biased toward low complexity: residues 1330–1348 and 1453–1478; these read LHLQ…QQQL and GGSV…QQQR. 2 stretches are compositionally biased toward acidic residues: residues 1486–1500 and 1510–1523; these read DDDD…DEAT and CDDD…DLDD. Basic and acidic residues predominate over residues 1524 to 1536; sequence DAHKLPPQSDERM. The segment covering 1565-1580 has biased composition (low complexity); the sequence is GALPPGVAPGAGSAGP. Positions 1644–1659 are enriched in polar residues; it reads QTPAQKRQQLQKLSPQ. Residues 1660–1675 are compositionally biased toward low complexity; that stretch reads STTSSSSHTSHSNLQP. Positions 1679 to 1693 are enriched in basic residues; sequence PLTHQHPHPPQHQQR.

It belongs to the G-protein coupled receptor 2 family. LN-TM7 subfamily. As to quaternary structure, forms a heterodimer, consisting of a large extracellular region non-covalently linked to a seven-transmembrane moiety. In terms of processing, proteolytically cleaved into 2 subunits, an extracellular subunit and a seven-transmembrane subunit.

The protein localises to the cell membrane. This chain is Latrophilin Cirl, found in Drosophila ananassae (Fruit fly).